Here is a 364-residue protein sequence, read N- to C-terminus: Mitogen-activated protein kinase 11 (364 aa).

Residues 24-308 (LQGLRPVGSG…AAEALAHAYF (285 aa)) form the Protein kinase domain. Residues 30–38 (VGSGAYGSV) and Lys53 contribute to the ATP site. Glu71 lines the nilotinib pocket. Asp150 functions as the Proton acceptor in the catalytic mechanism. Residue Thr180 is modified to Phosphothreonine; by MAP2K3, MAP2K4 and MAP2K6. Residues 180-182 (TGY) carry the TXY motif. Tyr182 carries the post-translational modification Phosphotyrosine; by MAP2K3, MAP2K4 and MAP2K6. 2 disordered regions span residues 311 to 331 (YHDPEDEPEAEPYDESVEAKE) and 343 to 364 (QEVLSFKPPEPPKPPGSLEIEQ). The span at 314–326 (PEDEPEAEPYDES) shows a compositional bias: acidic residues. Tyr323 carries the phosphotyrosine; by ZAP70 modification.

The protein belongs to the protein kinase superfamily. CMGC Ser/Thr protein kinase family. MAP kinase subfamily. Interacts with HDAC3 and DUSP16. Mg(2+) is required as a cofactor. In terms of processing, dually phosphorylated on Thr-180 and Tyr-182 by MAP2K3/MKK3, MAP2K4/MKK4 and MAP2K6/MKK6, which activates the enzyme. Highest levels in the brain and heart. Also expressed in the placenta, lung, liver, skeletal muscle, kidney and pancreas.

The protein localises to the cytoplasm. The protein resides in the nucleus. The catalysed reaction is L-seryl-[protein] + ATP = O-phospho-L-seryl-[protein] + ADP + H(+). The enzyme catalyses L-threonyl-[protein] + ATP = O-phospho-L-threonyl-[protein] + ADP + H(+). With respect to regulation, activated by phosphorylation on threonine and tyrosine by MAP2K3/MKK3, MAP2K4/MKK4 and MAP2K6/MKK6. MAP2K3/MKK3 and MAP2K6/MKK6 are both essential for the activation of MAPK11 induced by environmental stress. HDAC3 interacts directly and selectively with MAPK11 to repress ATF2 transcriptional activity, and regulate TNF gene expression in LPS-stimulated cells. Inhibited by SB203580 and pyridinyl-imidazole related compounds. Functionally, serine/threonine kinase which acts as an essential component of the MAP kinase signal transduction pathway. MAPK11 is one of the four p38 MAPKs which play an important role in the cascades of cellular responses evoked by extracellular stimuli such as pro-inflammatory cytokines or physical stress leading to direct activation of transcription factors. Accordingly, p38 MAPKs phosphorylate a broad range of proteins and it has been estimated that they may have approximately 200 to 300 substrates each. MAPK11 functions are mostly redundant with those of MAPK14. Some of the targets are downstream kinases which are activated through phosphorylation and further phosphorylate additional targets. RPS6KA5/MSK1 and RPS6KA4/MSK2 can directly phosphorylate and activate transcription factors such as CREB1, ATF1, the NF-kappa-B isoform RELA/NFKB3, STAT1 and STAT3, but can also phosphorylate histone H3 and the nucleosomal protein HMGN1. RPS6KA5/MSK1 and RPS6KA4/MSK2 play important roles in the rapid induction of immediate-early genes in response to stress or mitogenic stimuli, either by inducing chromatin remodeling or by recruiting the transcription machinery. On the other hand, two other kinase targets, MAPKAPK2/MK2 and MAPKAPK3/MK3, participate in the control of gene expression mostly at the post-transcriptional level, by phosphorylating ZFP36 (tristetraprolin) and ELAVL1, and by regulating EEF2K, which is important for the elongation of mRNA during translation. MKNK1/MNK1 and MKNK2/MNK2, two other kinases activated by p38 MAPKs, regulate protein synthesis by phosphorylating the initiation factor EIF4E2. In the cytoplasm, the p38 MAPK pathway is an important regulator of protein turnover. For example, CFLAR is an inhibitor of TNF-induced apoptosis whose proteasome-mediated degradation is regulated by p38 MAPK phosphorylation. Ectodomain shedding of transmembrane proteins is regulated by p38 MAPKs as well. In response to inflammatory stimuli, p38 MAPKs phosphorylate the membrane-associated metalloprotease ADAM17. Such phosphorylation is required for ADAM17-mediated ectodomain shedding of TGF-alpha family ligands, which results in the activation of EGFR signaling and cell proliferation. Additional examples of p38 MAPK substrates are the FGFR1. FGFR1 can be translocated from the extracellular space into the cytosol and nucleus of target cells, and regulates processes such as rRNA synthesis and cell growth. FGFR1 translocation requires p38 MAPK activation. In the nucleus, many transcription factors are phosphorylated and activated by p38 MAPKs in response to different stimuli. Classical examples include ATF1, ATF2, ATF6, ELK1, PTPRH, DDIT3, TP53/p53 and MEF2C and MEF2A. The p38 MAPKs are emerging as important modulators of gene expression by regulating chromatin modifiers and remodelers. The promoters of several genes involved in the inflammatory response, such as IL6, IL8 and IL12B, display a p38 MAPK-dependent enrichment of histone H3 phosphorylation on 'Ser-10' (H3S10ph) in LPS-stimulated myeloid cells. This phosphorylation enhances the accessibility of the cryptic NF-kappa-B-binding sites marking promoters for increased NF-kappa-B recruitment. Phosphorylates NLRP1 downstream of MAP3K20/ZAK in response to UV-B irradiation and ribosome collisions, promoting activation of the NLRP1 inflammasome and pyroptosis. Phosphorylates methyltransferase DOT1L on 'Ser-834', 'Thr-900', 'Ser-902', 'Thr-984', 'Ser-1001', 'Ser-1009' and 'Ser-1104'. The chain is Mitogen-activated protein kinase 11 (MAPK11) from Homo sapiens (Human).